The sequence spans 147 residues: Hemoglobin subunit delta (147 aa).

In terms of domain architecture, Globin spans 3–147 (HLTPEEKAAV…VATALAHKYH (145 aa)). The heme b site is built by histidine 64 and histidine 93.

The protein belongs to the globin family. In terms of assembly, heterotetramer of two delta chains and two alpha chains. In terms of tissue distribution, red blood cells.

This chain is Hemoglobin subunit delta (HBD), found in Ateles geoffroyi (Black-handed spider monkey).